Here is a 92-residue protein sequence, read N- to C-terminus: Large ribosomal subunit protein bL25 (92 aa).

This sequence belongs to the bacterial ribosomal protein bL25 family. As to quaternary structure, part of the 50S ribosomal subunit; part of the 5S rRNA/L5/L18/L25 subcomplex. Contacts the 5S rRNA. Binds to the 5S rRNA independently of L5 and L18.

In terms of biological role, this is one of the proteins that binds to the 5S RNA in the ribosome where it forms part of the central protuberance. This Aliivibrio fischeri (strain MJ11) (Vibrio fischeri) protein is Large ribosomal subunit protein bL25.